The primary structure comprises 218 residues: Ribose-5-phosphate isomerase A (218 aa).

Residues 28–31 (TGST), 81–84 (DGAD), and 94–97 (KGGG) contribute to the substrate site. Glu-103 functions as the Proton acceptor in the catalytic mechanism. Lys-121 serves as a coordination point for substrate.

The protein belongs to the ribose 5-phosphate isomerase family. Homodimer.

It carries out the reaction aldehydo-D-ribose 5-phosphate = D-ribulose 5-phosphate. It functions in the pathway carbohydrate degradation; pentose phosphate pathway; D-ribose 5-phosphate from D-ribulose 5-phosphate (non-oxidative stage): step 1/1. Its function is as follows. Catalyzes the reversible conversion of ribose-5-phosphate to ribulose 5-phosphate. This chain is Ribose-5-phosphate isomerase A, found in Sodalis glossinidius (strain morsitans).